Here is a 576-residue protein sequence, read N- to C-terminus: (+)-alpha-terpineol synthase (576 aa).

Residues arginine 286, aspartate 323, aspartate 327, arginine 466, and asparagine 469 each contribute to the (2E)-geranyl diphosphate site. The Mg(2+) site is built by aspartate 323 and aspartate 327. The short motif at 323-327 (DDVYD) is the DDXXD motif element. Positions 469, 473, and 477 each coordinate Mg(2+).

It belongs to the terpene synthase family. Tpsb subfamily. It depends on Mg(2+) as a cofactor. Mn(2+) is required as a cofactor.

The catalysed reaction is (2E)-geranyl diphosphate + H2O = (R)-alpha-terpineol + diphosphate. Functionally, monoterpene synthase producing mainly (+)-alpha-terpineol (44%) and (-)-limonene (33.6%) and lower amounts of (E)-geraniol (5.9%), linalool (5.0%), myrcene (3.4%), (-)-alpha-pinene (3.3%), (+)-sabinene (3.0%) and alpha-terpinolene (1.6%). The polypeptide is (+)-alpha-terpineol synthase (Santalum album (White sandalwood)).